Reading from the N-terminus, the 995-residue chain is Endo-beta-N-acetylglucosaminidase EndoS (995 aa).

The first 36 residues, 1–36 (MDKHLLVKRTLGCVCAATLMGAALATHHDSLNTVKA), serve as a signal peptide directing secretion. Residues 112 to 432 (SLYGGYFRTW…KDATDNIFHS (321 aa)) enclose the GH18 domain. His-151, Trp-153, and Arg-186 together coordinate a glycoprotein. Residue Glu-235 is the Proton donor of the active site. The a glycoprotein site is built by Asp-237, Gln-303, Tyr-305, Glu-349, Glu-350, Asn-356, and Tyr-402. LRR repeat units follow at residues 437–460 (SKAL…DFPD), 478–503 (LERF…KFKK), 562–585 (LTGL…DAAT), and 586–609 (LTSL…ENRQ). The tract at residues 765-923 (MVNLAEGATV…VPELQILGYP (159 aa)) is carbohydrate-binding module (CBM). 5 residues coordinate Ca(2+): Lys-786, Asp-789, Gln-791, Pro-915, and Glu-916. The interval 924–995 (LPNADTIMKT…CIEKRQLLKK (72 aa)) is three-helix bundle (3H).

It belongs to the glycosyl hydrolase 18 family. Post-translationally, cleaved by SpeB protease; leading to loss of endoglucosidase activity. EndoS is produced and secreted prior to SpeB, suggesting that it is degraded after acting as a host immune evasion factor.

Its subcellular location is the secreted. The protein localises to the host extracellular space. It carries out the reaction an N(4)-(oligosaccharide-(1-&gt;3)-[oligosaccharide-(1-&gt;6)]-beta-D-Man-(1-&gt;4)-beta-D-GlcNAc-(1-&gt;4)-alpha-D-GlcNAc)-L-asparaginyl-[protein] + H2O = an oligosaccharide-(1-&gt;3)-[oligosaccharide-(1-&gt;6)]-beta-D-Man-(1-&gt;4)-D-GlcNAc + N(4)-(N-acetyl-beta-D-glucosaminyl)-L-asparaginyl-[protein]. Its function is as follows. Endoglucosidase that acts as a host immune evasion factor by mediating hydrolysis of the N-linked glycan from the Fc region of host immunoglobulin-gamma (IgG) during infection. Specifically catalyzes the hydrolysis of the beta-1,4 linkage between the first two N-acetylglucosamine residues of the complex-type N-linked glycan located on 'Asn-297' of the Fc region of IgG antibodies (IGHG1, IGHG2, IGHG3 or IGHG4), thereby preventing interaction between IgGs and Fc receptors and ability to activate the complement pathway. Shows a specificity for biantennary complex type N-glycans; does neither cleave larger complex type glycans nor oligomannose and nor hybrid-type glycans. Specifically acts on IgGs; does not act on immunoglobulin alpha, beta, delta or mu. This chain is Endo-beta-N-acetylglucosaminidase EndoS, found in Streptococcus pyogenes serotype M1.